A 329-amino-acid chain; its full sequence is Tyrosine recombinase XerC 1 (329 aa).

The Core-binding (CB) domain occupies Ala14–Ala101. One can recognise a Tyr recombinase domain in the interval Arg123–Asp320. Active-site residues include Arg163, Lys198, His272, Arg275, and His298. Tyr307 functions as the O-(3'-phospho-DNA)-tyrosine intermediate in the catalytic mechanism.

The protein belongs to the 'phage' integrase family. XerC subfamily. Forms a cyclic heterotetrameric complex composed of two molecules of XerC and two molecules of XerD.

It localises to the cytoplasm. Its function is as follows. Site-specific tyrosine recombinase, which acts by catalyzing the cutting and rejoining of the recombining DNA molecules. The XerC-XerD complex is essential to convert dimers of the bacterial chromosome into monomers to permit their segregation at cell division. It also contributes to the segregational stability of plasmids. The polypeptide is Tyrosine recombinase XerC 1 (xerC1) (Ralstonia nicotianae (strain ATCC BAA-1114 / GMI1000) (Ralstonia solanacearum)).